A 401-amino-acid chain; its full sequence is Elongation factor Tu (401 aa).

Positions 10 to 211 (KPHLNIGTIG…AVDTYVPNPT (202 aa)) constitute a tr-type G domain. The G1 stretch occupies residues 19-26 (GHVDHGKT). 19-26 (GHVDHGKT) contacts GTP. Thr26 contacts Mg(2+). Residues 62-66 (GITIA) are G2. Residues 83 to 86 (DCPG) are G3. GTP-binding positions include 83–87 (DCPGH) and 138–141 (NKAD). Residues 138–141 (NKAD) are G4. The tract at residues 179–181 (SAL) is G5.

This sequence belongs to the TRAFAC class translation factor GTPase superfamily. Classic translation factor GTPase family. EF-Tu/EF-1A subfamily. Monomer.

The protein resides in the cytoplasm. It catalyses the reaction GTP + H2O = GDP + phosphate + H(+). In terms of biological role, GTP hydrolase that promotes the GTP-dependent binding of aminoacyl-tRNA to the A-site of ribosomes during protein biosynthesis. This Leptospira biflexa serovar Patoc (strain Patoc 1 / Ames) protein is Elongation factor Tu.